The primary structure comprises 109 residues: Thiosulfate sulfurtransferase GlpE (109 aa).

The Rhodanese domain maps to 16–104 (REQGAVVVDV…WRTTFPSETA (89 aa)). Catalysis depends on cysteine 64, which acts as the Cysteine persulfide intermediate.

This sequence belongs to the GlpE family.

The protein resides in the cytoplasm. It catalyses the reaction thiosulfate + hydrogen cyanide = thiocyanate + sulfite + 2 H(+). It carries out the reaction thiosulfate + [thioredoxin]-dithiol = [thioredoxin]-disulfide + hydrogen sulfide + sulfite + 2 H(+). In terms of biological role, transferase that catalyzes the transfer of sulfur from thiosulfate to thiophilic acceptors such as cyanide or dithiols. May function in a CysM-independent thiosulfate assimilation pathway by catalyzing the conversion of thiosulfate to sulfite, which can then be used for L-cysteine biosynthesis. The chain is Thiosulfate sulfurtransferase GlpE from Pseudomonas fluorescens (strain Pf0-1).